A 273-amino-acid chain; its full sequence is HUWE1-associated protein modifying stress responses 2 (273 aa).

Disordered stretches follow at residues Gly146–Val181, Ile204–Asp230, and Lys251–Val273. Positions Pro149–Pro165 are enriched in pro residues. Polar residues-rich tracts occupy residues Ser170–Val181, Ser208–Ala218, and Ser254–Gln267. The nuclear localization signal stretch occupies residues Ile249–Val273.

Belongs to the HAPSTR1 family. In terms of assembly, homooligomer. Heterooligomer with HAPSTR1; the interaction is direct and stabilizes HAPSTR1 independently of HUWE1. Interacts with HUWE1. In terms of tissue distribution, expressed in a tissue-restricted manner compared to HAPSTR1.

Its subcellular location is the nucleus. Together with HAPSTR1 plays a central regulatory role in the cellular response to molecular stressors, such as DNA damage, nutrient scarcity, and protein misfolding. Regulates these multiple stress response signaling pathways by stabilizing HAPSTR1, but also independently of HAPSTR1. The polypeptide is HUWE1-associated protein modifying stress responses 2 (Homo sapiens (Human)).